The sequence spans 74 residues: Mitochondrial import receptor subunit TOM6 homolog (74 aa).

Polar residues predominate over residues 1-16 (MASSTVPVSAAGSANE). The disordered stretch occupies residues 1-22 (MASSTVPVSAAGSANETPEIPD). Ala-2 is modified (N-acetylalanine).

It belongs to the Tom6 family. Forms part of the preprotein translocase complex of the outer mitochondrial membrane (TOM complex) which consists of at least 7 different proteins (TOMM5, TOMM6, TOMM7, TOMM20, TOMM22, TOMM40 and TOMM70).

The protein resides in the mitochondrion outer membrane. The protein is Mitochondrial import receptor subunit TOM6 homolog (TOMM6) of Homo sapiens (Human).